A 55-amino-acid polypeptide reads, in one-letter code: Sec-independent protein translocase protein TatA (55 aa).

The chain crosses the membrane as a helical span at residues 1 to 21 (MFGELGVPEVLFILGIALLIF).

This sequence belongs to the TatA/E family. Forms a complex with TatC.

It localises to the cell inner membrane. Functionally, part of the twin-arginine translocation (Tat) system that transports large folded proteins containing a characteristic twin-arginine motif in their signal peptide across membranes. TatA could form the protein-conducting channel of the Tat system. The polypeptide is Sec-independent protein translocase protein TatA (Koribacter versatilis (strain Ellin345)).